The chain runs to 652 residues: Vitrin (652 aa).

The signal sequence occupies residues methionine 1–serine 26. The LCCL domain maps to threonine 40–phenylalanine 133. 2 cysteine pairs are disulfide-bonded: cysteine 46–cysteine 62 and cysteine 66–cysteine 86. Disordered stretches follow at residues glutamate 137–proline 181 and threonine 196–leucine 231. Low complexity predominate over residues threonine 145 to proline 158. Over residues threonine 196–serine 212 the composition is skewed to polar residues. VWFA domains are found at residues aspartate 267–valine 452 and aspartate 469–valine 638. An N-linked (GlcNAc...) asparagine glycan is attached at asparagine 494.

In terms of assembly, binds dermatan sulfate and chondroitin sulfate.

The protein localises to the secreted. It localises to the extracellular space. The protein resides in the extracellular matrix. Promotes matrix assembly and cell adhesiveness. Plays a role in spinal cord formation by regulating the proliferation and differentiation of neural stem cells. This chain is Vitrin (VIT), found in Bos taurus (Bovine).